The following is a 135-amino-acid chain: MVKCMKPGKAVILLQGRYTGKKAVIVKSFDDGTVEKKYGHCLVAGLKKYPSKVIRKDSAKKTAKKSRVKCFFKVINYQHVMPTRYTLDLDLKNVVSADAISSKDKKVTALKEAKAKFEERFKTGKNRWFFTKLRF.

This sequence belongs to the eukaryotic ribosomal protein eL27 family.

This is Large ribosomal subunit protein eL27z (RPL27A) from Arabidopsis thaliana (Mouse-ear cress).